The following is a 132-amino-acid chain: Small ribosomal subunit protein uS11 (132 aa).

It belongs to the universal ribosomal protein uS11 family. As to quaternary structure, part of the 30S ribosomal subunit. Interacts with proteins S7 and S18. Binds to IF-3.

Located on the platform of the 30S subunit, it bridges several disparate RNA helices of the 16S rRNA. Forms part of the Shine-Dalgarno cleft in the 70S ribosome. The protein is Small ribosomal subunit protein uS11 of Chlamydia trachomatis serovar D (strain ATCC VR-885 / DSM 19411 / UW-3/Cx).